The chain runs to 83 residues: uncharacterized protein (83 aa).

A run of 3 helical transmembrane segments spans residues 4–24 (AILS…GVLM), 32–52 (IGNI…LKAF), and 54–74 (YYDL…IIIG).

It is found in the cell membrane. This is an uncharacterized protein from Methanocaldococcus jannaschii (strain ATCC 43067 / DSM 2661 / JAL-1 / JCM 10045 / NBRC 100440) (Methanococcus jannaschii).